The primary structure comprises 219 residues: Endonuclease V (219 aa).

Mg(2+) contacts are provided by Asp41 and Asp107.

The protein belongs to the endonuclease V family. Mg(2+) serves as cofactor.

The protein resides in the cytoplasm. It carries out the reaction Endonucleolytic cleavage at apurinic or apyrimidinic sites to products with a 5'-phosphate.. Functionally, DNA repair enzyme involved in the repair of deaminated bases. Selectively cleaves double-stranded DNA at the second phosphodiester bond 3' to a deoxyinosine leaving behind the intact lesion on the nicked DNA. The protein is Endonuclease V of Desulfurococcus amylolyticus (strain DSM 18924 / JCM 16383 / VKM B-2413 / 1221n) (Desulfurococcus kamchatkensis).